A 90-amino-acid chain; its full sequence is uncharacterized protein (90 aa).

Residues 13-34 are disordered; sequence APEGMGPHHAASSSHHSAQHHH. The chain crosses the membrane as a helical span at residues 52-72; the sequence is YKMWFLYALILALIFGVFMWW.

It is found in the host membrane. This is an uncharacterized protein from Invertebrate iridescent virus 3 (IIV-3).